The primary structure comprises 1122 residues: Adhesin P1 (1122 aa).

A signal peptide spans 1–26 (MKKLIFKLSVGITPLALIGLGSFGLA). Disordered stretches follow at residues 182–208 (ATGDTSAEGSATPAGGGSSSSAAGGGA), 244–273 (DYNSDQNKIPKPKTLLDSSESSESINGGRT), and 541–562 (GALQNSGNPQPTSTPMPNSNGN). Positions 195 to 208 (AGGGSSSSAAGGGA) are enriched in gly residues. Over residues 259-273 (LDSSESSESINGGRT) the composition is skewed to polar residues. A helical transmembrane segment spans residues 1001–1021 (AISIPIIIIALALALGLGIGI). Residues 1066–1122 (KTPQMLQANKKDGASSPSKPSAPAAKKPAGPTKPSAPGAKPTAPAKPKAPAPTKKIE) form a disordered region. A compositionally biased stretch (low complexity) spans 1079–1122 (ASSPSKPSAPAAKKPAGPTKPSAPGAKPTAPAKPKAPAPTKKIE).

Belongs to the adhesin P1 family.

Its subcellular location is the cell membrane. Functionally, could be involved in cytadherence. The sequence is that of Adhesin P1 (gapA) from Mycoplasmoides gallisepticum (strain R(low / passage 15 / clone 2)) (Mycoplasma gallisepticum).